The following is a 465-amino-acid chain: Mothers against decapentaplegic homolog 1 (465 aa).

An N-acetylmethionine modification is found at methionine 1. The region spanning 12 to 136 (PAVKRLLGWK…YKRVESPVLP (125 aa)) is the MH1 domain. Positions 64, 109, 121, and 126 each coordinate Zn(2+). A disordered region spans residues 162–246 (NEPHMPLNAT…DGSQPMDTNM (85 aa)). Over residues 179 to 212 (PNSHPFPHSPNSSYPNSPGGSSSTYPHSPTSSDP) the composition is skewed to low complexity. Residues 221–232 (DTPPPAYLPPED) show a composition bias toward pro residues. Residues 271 to 465 (WCSIVYYELN…SPHNPISSVS (195 aa)) form the MH2 domain. Residue threonine 322 is modified to Phosphothreonine; by MINK1, TNIK and MAP4K4. The segment at 418–428 (KGWGAEYHRQD) is L3 loop. 2 positions are modified to phosphoserine: serine 463 and serine 465.

The protein belongs to the dwarfin/SMAD family. As to quaternary structure, found in a complex with SMAD4 and YY1. Interacts with HGS, NANOG and ZCCHC12. Upon C-terminus phosphorylation: forms trimers with another SMAD1 and the co-SMAD SMAD4. Interacts with PEBP2-alpha subunit, CREB-binding protein (CBP), p300, SMURF1, SMURF2, USP15 and HOXC8. Associates with ZNF423 or ZNF521 in response to BMP2 leading to activate transcription of BMP target genes. Interacts with SKOR1. Interacts (via MH2 domain) with LEMD3. Binding to LEMD3 results in at least a partial reduction of receptor-mediated phosphorylation. Forms a ternary complex with PSMB4 and OAZ1 before PSMB4 is incorporated into the 20S proteasome. Interacts (via MH2 domain) with FAM83G (via MH2 domain); in a SMAD4-independent manner. Interacts with ZC3H3. Interacts with TMEM119. Interacts (via MH1 and MH2 domains) with ZNF8. Interacts with RANBP3L; the interaction increases when SMAD1 is not phosphorylated and mediates SMAD1 nuclear export. Interacts with EGR1; this interaction inhibits SMAD1 dephosphorylation. Interacts with SMAD6. Interacts with YAP1. Interacts with MTMR4; negatively regulates BMP signaling through SMAD1 dephosphorylation and retention in endosomes. Phosphorylation of the C-terminal SVS motif by BMP type 1 receptor kinase activates SMAD1 by promoting dissociation from the receptor and trimerization with SMAD4. Phosphorylation by ERK2 MAP kinase in response to EGF or HGF prevents SMAD1 nuclear accumulation and transcriptional activity in response to BMP. Dephosphorylation, probably by PPM1A, induces its export from the nucleus to the cytoplasm. Dephosphorylation is inhibited by association with EGR1. Phosphorylation by CDK8/9 creates binding sites for YAP1, and subsequent phosphorylation by GSK3 switches off YAP1 binding and adds binding sites for SMURF1. Post-translationally, ubiquitinated by SMAD-specific E3 ubiquitin ligase SMURF1, leading to its degradation. Monoubiquitinated, leading to prevent DNA-binding. Deubiquitination by USP15 alleviates inhibition and promotes activation of TGF-beta target genes. Dephosphorylation, probably by PPM1A, induces its export from the nucleus to the cytoplasm. Phospho-SMAD1 is ubiquitinated by CHIP leading to disruption of the SMAD1-SMAD4 complex. Ubiquitous.

The protein localises to the cytoplasm. It localises to the nucleus. In terms of biological role, transcriptional modulator that plays a role in various cellular processes, including embryonic development, cell differentiation, and tissue homeostasis. Upon BMP ligand binding to their receptors at the cell surface, is phosphorylated by activated type I BMP receptors (BMPRIs) and associates with SMAD4 to form a heteromeric complex which translocates into the nucleus acting as transcription factor. In turn, the hetero-trimeric complex recognizes cis-regulatory elements containing Smad Binding Elements (SBEs) to modulate the outcome of the signaling network. SMAD1/OAZ1/PSMB4 complex mediates the degradation of the CREBBP/EP300 repressor SNIP1. Positively regulates BMP4-induced expression of odontogenic development regulator MSX1 following IPO7-mediated nuclear import. This Mus musculus (Mouse) protein is Mothers against decapentaplegic homolog 1 (Smad1).